The chain runs to 161 residues: MGHHHHHHGGSGHHHHHHHHGSGHYGGGAVLVTPIVTPVPVVYGSRSSSYCPKSMTVAYVLWFFFGILGFHRLYLGRVGTFFLYFFTAGVFGLGWLFDAFYTHKMVKHYNECEFTKSCVGQSPPATIPIYQSEGAYPTYQQVPQQPPQFYQPQQQQPQYQP.

Topologically, residues 1-24 (MGHHHHHHGGSGHHHHHHHHGSGH) are cytoplasmic. A helical membrane pass occupies residues 25–45 (YGGGAVLVTPIVTPVPVVYGS). The Extracellular segment spans residues 46-54 (RSSSYCPKS). Positions 52–100 (PKSMTVAYVLWFFFGILGFHRLYLGRVGTFFLYFFTAGVFGLGWLFDAF) constitute a TM2 domain. The chain crosses the membrane as a helical span at residues 55 to 75 (MTVAYVLWFFFGILGFHRLYL). Residues 76–80 (GRVGT) lie on the Cytoplasmic side of the membrane. Residues 81–101 (FFLYFFTAGVFGLGWLFDAFY) form a helical membrane-spanning segment. At 102-161 (THKMVKHYNECEFTKSCVGQSPPATIPIYQSEGAYPTYQQVPQQPPQFYQPQQQQPQYQP) the chain is on the extracellular side. Positions 139-161 (YQQVPQQPPQFYQPQQQQPQYQP) are disordered.

The protein belongs to the TM2 family.

Its subcellular location is the membrane. The sequence is that of TM2 domain-containing protein DDB_G0278163 from Dictyostelium discoideum (Social amoeba).